We begin with the raw amino-acid sequence, 139 residues long: Small ribosomal subunit protein uS12 (139 aa).

Residues 1–21 (MSTVSQLIKKRRSSKTSKTKA) form a disordered region. Residues 8-18 (IKKRRSSKTSK) show a composition bias toward basic residues. Aspartate 102 is modified (3-methylthioaspartic acid).

It belongs to the universal ribosomal protein uS12 family. Part of the 30S ribosomal subunit. Contacts proteins S8 and S17. May interact with IF1 in the 30S initiation complex.

With S4 and S5 plays an important role in translational accuracy. Its function is as follows. Interacts with and stabilizes bases of the 16S rRNA that are involved in tRNA selection in the A site and with the mRNA backbone. Located at the interface of the 30S and 50S subunits, it traverses the body of the 30S subunit contacting proteins on the other side and probably holding the rRNA structure together. The combined cluster of proteins S8, S12 and S17 appears to hold together the shoulder and platform of the 30S subunit. The polypeptide is Small ribosomal subunit protein uS12 (Aster yellows witches'-broom phytoplasma (strain AYWB)).